A 180-amino-acid chain; its full sequence is Acireductone dioxygenase (180 aa).

Residues H97, H99, E103, and H141 each contribute to the Fe(2+) site. Positions 97, 99, 103, and 141 each coordinate Ni(2+).

It belongs to the acireductone dioxygenase (ARD) family. As to quaternary structure, monomer. Fe(2+) is required as a cofactor. The cofactor is Ni(2+).

The catalysed reaction is 1,2-dihydroxy-5-(methylsulfanyl)pent-1-en-3-one + O2 = 3-(methylsulfanyl)propanoate + CO + formate + 2 H(+). It catalyses the reaction 1,2-dihydroxy-5-(methylsulfanyl)pent-1-en-3-one + O2 = 4-methylsulfanyl-2-oxobutanoate + formate + 2 H(+). The protein operates within amino-acid biosynthesis; L-methionine biosynthesis via salvage pathway; L-methionine from S-methyl-5-thio-alpha-D-ribose 1-phosphate: step 5/6. Catalyzes 2 different reactions between oxygen and the acireductone 1,2-dihydroxy-3-keto-5-methylthiopentene (DHK-MTPene) depending upon the metal bound in the active site. Fe-containing acireductone dioxygenase (Fe-ARD) produces formate and 2-keto-4-methylthiobutyrate (KMTB), the alpha-ketoacid precursor of methionine in the methionine recycle pathway. Ni-containing acireductone dioxygenase (Ni-ARD) produces methylthiopropionate, carbon monoxide and formate, and does not lie on the methionine recycle pathway. This chain is Acireductone dioxygenase, found in Acidiphilium cryptum (strain JF-5).